We begin with the raw amino-acid sequence, 270 residues long: Undecaprenyl-diphosphatase 3 (270 aa).

The next 7 helical transmembrane spans lie at 5-25 (YYIL…PIPI), 42-62 (IEGF…VLLI), 89-109 (FFFI…GVLF), 117-137 (LKGV…LWII), 192-212 (FSFL…ITDI), 220-240 (TLFV…YISL), and 250-270 (GNLK…LIFL).

This sequence belongs to the UppP family.

Its subcellular location is the cell membrane. It catalyses the reaction di-trans,octa-cis-undecaprenyl diphosphate + H2O = di-trans,octa-cis-undecaprenyl phosphate + phosphate + H(+). Its function is as follows. Catalyzes the dephosphorylation of undecaprenyl diphosphate (UPP). Confers resistance to bacitracin. The polypeptide is Undecaprenyl-diphosphatase 3 (Bacillus anthracis).